A 77-amino-acid chain; its full sequence is Acyl carrier protein (77 aa).

A Carrier domain is found at 2 to 77; the sequence is ASIEKRIKEI…DAIDYITDHT (76 aa). Serine 37 is subject to O-(pantetheine 4'-phosphoryl)serine.

This sequence belongs to the acyl carrier protein (ACP) family. Post-translationally, 4'-phosphopantetheine is transferred from CoA to a specific serine of apo-ACP by AcpS. This modification is essential for activity because fatty acids are bound in thioester linkage to the sulfhydryl of the prosthetic group.

The protein resides in the cytoplasm. It participates in lipid metabolism; fatty acid biosynthesis. Its function is as follows. Carrier of the growing fatty acid chain in fatty acid biosynthesis. The sequence is that of Acyl carrier protein from Geobacter sp. (strain M21).